The primary structure comprises 412 residues: Imidazolonepropionase (412 aa).

Positions 76 and 78 each coordinate Fe(3+). Zn(2+)-binding residues include His-76 and His-78. The 4-imidazolone-5-propanoate site is built by Arg-85, Tyr-148, and His-181. Tyr-148 provides a ligand contact to N-formimidoyl-L-glutamate. His-242 contacts Fe(3+). Residue His-242 coordinates Zn(2+). Glu-245 contacts 4-imidazolone-5-propanoate. Asp-317 contributes to the Fe(3+) binding site. Residue Asp-317 coordinates Zn(2+). N-formimidoyl-L-glutamate-binding residues include Asn-319 and Gly-321. Position 322 (Ser-322) interacts with 4-imidazolone-5-propanoate.

It belongs to the metallo-dependent hydrolases superfamily. HutI family. Zn(2+) serves as cofactor. The cofactor is Fe(3+).

The protein localises to the cytoplasm. It catalyses the reaction 4-imidazolone-5-propanoate + H2O = N-formimidoyl-L-glutamate. Its pathway is amino-acid degradation; L-histidine degradation into L-glutamate; N-formimidoyl-L-glutamate from L-histidine: step 3/3. Catalyzes the hydrolytic cleavage of the carbon-nitrogen bond in imidazolone-5-propanoate to yield N-formimidoyl-L-glutamate. It is the third step in the universal histidine degradation pathway. This Staphylococcus saprophyticus subsp. saprophyticus (strain ATCC 15305 / DSM 20229 / NCIMB 8711 / NCTC 7292 / S-41) protein is Imidazolonepropionase.